The sequence spans 555 residues: Protein NRT1/ PTR FAMILY 5.4 (555 aa).

2 consecutive transmembrane segments (helical) span residues 18–38 (AALF…GLAS) and 62–82 (WIGV…SILG). Residue threonine 86 is modified to Phosphothreonine. 10 consecutive transmembrane segments (helical) span residues 87–107 (VLLT…SVTV), 116–136 (VFFM…PCVM), 159–179 (NYWY…LIFI), 187–207 (LGFS…LIGI), 311–331 (IPIW…NTFF), 348–368 (IPPA…IPLY), 392–412 (IGVG…VEAK), 435–455 (LWLL…IVGM), 470–490 (IGAA…TGII), and 516–536 (YYYW…LFIA).

Belongs to the major facilitator superfamily. Proton-dependent oligopeptide transporter (POT/PTR) (TC 2.A.17) family. As to expression, expressed in roots and flowers.

It localises to the membrane. This Arabidopsis thaliana (Mouse-ear cress) protein is Protein NRT1/ PTR FAMILY 5.4 (NPF5.4).